The following is a 71-amino-acid chain: UPF0434 protein Csal_1588 (71 aa).

The protein belongs to the UPF0434 family.

The sequence is that of UPF0434 protein Csal_1588 from Chromohalobacter salexigens (strain ATCC BAA-138 / DSM 3043 / CIP 106854 / NCIMB 13768 / 1H11).